The chain runs to 281 residues: Bifunctional protein FolD (281 aa).

NADP(+) is bound by residues 165–167 (GRS) and S190.

The protein belongs to the tetrahydrofolate dehydrogenase/cyclohydrolase family. In terms of assembly, homodimer.

It catalyses the reaction (6R)-5,10-methylene-5,6,7,8-tetrahydrofolate + NADP(+) = (6R)-5,10-methenyltetrahydrofolate + NADPH. The catalysed reaction is (6R)-5,10-methenyltetrahydrofolate + H2O = (6R)-10-formyltetrahydrofolate + H(+). The protein operates within one-carbon metabolism; tetrahydrofolate interconversion. Catalyzes the oxidation of 5,10-methylenetetrahydrofolate to 5,10-methenyltetrahydrofolate and then the hydrolysis of 5,10-methenyltetrahydrofolate to 10-formyltetrahydrofolate. This chain is Bifunctional protein FolD, found in Polaromonas naphthalenivorans (strain CJ2).